We begin with the raw amino-acid sequence, 421 residues long: Gamma-glutamyl phosphate reductase (421 aa).

Belongs to the gamma-glutamyl phosphate reductase family.

It localises to the cytoplasm. It catalyses the reaction L-glutamate 5-semialdehyde + phosphate + NADP(+) = L-glutamyl 5-phosphate + NADPH + H(+). It participates in amino-acid biosynthesis; L-proline biosynthesis; L-glutamate 5-semialdehyde from L-glutamate: step 2/2. Functionally, catalyzes the NADPH-dependent reduction of L-glutamate 5-phosphate into L-glutamate 5-semialdehyde and phosphate. The product spontaneously undergoes cyclization to form 1-pyrroline-5-carboxylate. The protein is Gamma-glutamyl phosphate reductase of Stutzerimonas stutzeri (strain A1501) (Pseudomonas stutzeri).